The chain runs to 467 residues: ATP synthase subunit beta, sodium ion specific (467 aa).

151–158 lines the ATP pocket; the sequence is GGAGVGKT.

Belongs to the ATPase alpha/beta chains family. F-type ATPases have 2 components, CF(1) - the catalytic core - and CF(0) - the membrane proton channel. CF(1) has five subunits: alpha(3), beta(3), gamma(1), delta(1), epsilon(1). CF(0) has three main subunits: a, b and c.

It is found in the cell membrane. The enzyme catalyses 4 Na(+)(in) + ATP + H2O = 4 Na(+)(out) + ADP + phosphate + H(+). In terms of biological role, produces ATP from ADP in the presence of a sodium ion gradient across the membrane. The beta chain is the catalytic subunit. The chain is ATP synthase subunit beta, sodium ion specific from Propionigenium modestum.